We begin with the raw amino-acid sequence, 127 residues long: MNQCKVMNDGYLEKRSNGLLQLWKKKRCVLSDEGLRLYGCKGDSGKEMRFEQMTTLDCVEYKRGLVYFTIVMNDGKEVDFRCQQEGTAWNAEIALALVRFKNRVAVQTGRNRHLSHLGSCGEGDVEL.

Residues 5 to 108 (KVMNDGYLEK…RFKNRVAVQT (104 aa)) enclose the PH domain.

The protein belongs to the PHLDA3 family.

It localises to the cytoplasm. Its subcellular location is the membrane. Functionally, p53/tp53-regulated repressor of Akt/akt1 signaling. Represses akt1 by preventing akt1-binding to membrane lipids, thereby inhibiting akt1 translocation to the cellular membrane and activation. Contributes to p53/tp53-dependent apoptosis by repressing akt1 activity. Its direct transcription regulation by p53/tp53 may explain how p53/tp53 can negatively regulate akt1. May act as a tumor suppressor. The polypeptide is Pleckstrin homology-like domain family A member 3 (phlda3) (Danio rerio (Zebrafish)).